The following is an 890-amino-acid chain: Possible lysine-specific histone demethylase 1 (890 aa).

The segment covering Met-1 to Met-13 has biased composition (polar residues). The interval Met-1–Val-164 is disordered. Residues Ser-24 and Ser-27 each carry the phosphoserine modification. The segment covering Asn-84–Gln-109 has biased composition (polar residues). Positions Ala-110–Glu-122 are enriched in basic and acidic residues. Residues Ala-123 to Ser-138 are compositionally biased toward low complexity. The 100-residue stretch at Gln-160–Ile-259 folds into the SWIRM domain. Val-267 to Ala-295 contacts FAD. A disordered region spans residues Asp-860 to Gln-890. Over residues Leu-861–Asn-882 the composition is skewed to low complexity. Ser-866 bears the Phosphoserine mark.

Belongs to the flavin monoamine oxidase family. Component of a complex that contains at least HDAC1/Rpd3, CoRest and Su(var)3-3/Hdm. It depends on FAD as a cofactor.

The protein resides in the nucleus. Its subcellular location is the chromosome. In terms of biological role, probable histone demethylase that specifically demethylates 'Lys-4' of histone H3, a specific tag for epigenetic transcriptional activation, thereby acting as a corepressor. Required for heterochromatic gene silencing. Acts by oxidizing the substrate by FAD to generate the corresponding imine that is subsequently hydrolyzed. Demethylates both mono- and tri-methylated 'Lys-4' of histone H3. May also demethylate 'Lys-9' of histone H3, Plays a role in the repression of neuronal genes. The chain is Possible lysine-specific histone demethylase 1 (Su(var)3-3) from Drosophila melanogaster (Fruit fly).